Here is a 340-residue protein sequence, read N- to C-terminus: Phosphoribosylformylglycinamidine cyclo-ligase (340 aa).

The protein belongs to the AIR synthase family.

The protein resides in the cytoplasm. It carries out the reaction 2-formamido-N(1)-(5-O-phospho-beta-D-ribosyl)acetamidine + ATP = 5-amino-1-(5-phospho-beta-D-ribosyl)imidazole + ADP + phosphate + H(+). It functions in the pathway purine metabolism; IMP biosynthesis via de novo pathway; 5-amino-1-(5-phospho-D-ribosyl)imidazole from N(2)-formyl-N(1)-(5-phospho-D-ribosyl)glycinamide: step 2/2. The polypeptide is Phosphoribosylformylglycinamidine cyclo-ligase (Streptococcus pyogenes serotype M1).